Here is a 182-residue protein sequence, read N- to C-terminus: Biotin transporter BioY2 (182 aa).

The next 5 membrane-spanning stretches (helical) occupy residues 12–32 (IALG…IGIV), 54–74 (FFAI…FTGG), 78–98 (IAVL…MGTL), 111–131 (IPAF…GTLW), and 150–170 (PFVF…LALI).

It belongs to the BioY family. As to quaternary structure, in E.coli forms a stable energy-coupling factor (ECF) transporter complex composed of 2 membrane-embedded substrate-binding protein (S component), 2 ATP-binding proteins (A and A' components) and 2 transmembrane proteins (T component), probably with a stoichiometry of 2:1:1:2. May be able to interact with more than 1 S component at a time.

It is found in the cell membrane. In terms of biological role, probably a biotin-binding protein that interacts with the energy-coupling factor (ECF) ABC-transporter complex. Unlike classic ABC transporters this ECF transporter provides the energy necessary to transport a number of different substrates. The substrates themselves are bound by transmembrane, not extracytoplasmic soluble proteins. In Lactococcus lactis subsp. cremoris (strain MG1363), this protein is Biotin transporter BioY2 (bioY2).